The primary structure comprises 305 residues: Ribosomal protein L11 methyltransferase (305 aa).

4 residues coordinate S-adenosyl-L-methionine: Thr-155, Gly-176, Asp-198, and Asn-241.

It belongs to the methyltransferase superfamily. PrmA family.

Its subcellular location is the cytoplasm. It carries out the reaction L-lysyl-[protein] + 3 S-adenosyl-L-methionine = N(6),N(6),N(6)-trimethyl-L-lysyl-[protein] + 3 S-adenosyl-L-homocysteine + 3 H(+). Its function is as follows. Methylates ribosomal protein L11. The sequence is that of Ribosomal protein L11 methyltransferase from Carboxydothermus hydrogenoformans (strain ATCC BAA-161 / DSM 6008 / Z-2901).